The primary structure comprises 141 residues: Hemoglobin subunit alpha-1 (141 aa).

The 141-residue stretch at 1 to 141 folds into the Globin domain; the sequence is VLTDEDKARV…LSKDLVSKYR (141 aa). H58 serves as a coordination point for O2. H87 is a heme b binding site.

The protein belongs to the globin family. As to quaternary structure, heterotetramer of two alpha chains and two beta chains. As to expression, red blood cells.

Involved in oxygen transport from the lung to the various peripheral tissues. The protein is Hemoglobin subunit alpha-1 of Naja naja (Indian cobra).